The sequence spans 141 residues: Large ribosomal subunit protein uL11 (141 aa).

It belongs to the universal ribosomal protein uL11 family. In terms of assembly, part of the ribosomal stalk of the 50S ribosomal subunit. Interacts with L10 and the large rRNA to form the base of the stalk. L10 forms an elongated spine to which L12 dimers bind in a sequential fashion forming a multimeric L10(L12)X complex. One or more lysine residues are methylated.

Its function is as follows. Forms part of the ribosomal stalk which helps the ribosome interact with GTP-bound translation factors. This chain is Large ribosomal subunit protein uL11, found in Clostridium acetobutylicum (strain ATCC 824 / DSM 792 / JCM 1419 / IAM 19013 / LMG 5710 / NBRC 13948 / NRRL B-527 / VKM B-1787 / 2291 / W).